Reading from the N-terminus, the 253-residue chain is Transposase for insertion sequence element IS904 (253 aa).

The region spanning 90 to 253 (KATAPNKVWL…SPKDFEKYNS (164 aa)) is the Integrase catalytic domain.

The protein belongs to the transposase IS3/IS150/IS904 family.

In terms of biological role, involved in the transposition of the insertion sequence. The protein is Transposase for insertion sequence element IS904 (nisX1) of Lactococcus lactis subsp. lactis (strain IL1403) (Streptococcus lactis).